The chain runs to 821 residues: Serine/threonine-protein kinase CTR1 (821 aa).

Disordered regions lie at residues 1–76 (MEMP…LNNQ) and 481–502 (NPGG…PSAN). The span at 14 to 25 (SQFSDDQVSVSV) shows a compositional bias: low complexity. Residues 35–49 (SLSSENRSNHNSGNT) show a composition bias toward polar residues. The region spanning 551–809 (LNIKEKIGAG…TIMDLLRPLI (259 aa)) is the Protein kinase domain. Residues 557–565 (IGAGSFGTV) and Lys578 each bind ATP. The Proton acceptor role is filled by Asp676.

This sequence belongs to the protein kinase superfamily. TKL Ser/Thr protein kinase family. RAF subfamily. As to quaternary structure, interacts with EIN2 (via C-terminus). As to expression, expressed in both seedlings and adult plants.

The enzyme catalyses L-seryl-[protein] + ATP = O-phospho-L-seryl-[protein] + ADP + H(+). It catalyses the reaction L-threonyl-[protein] + ATP = O-phospho-L-threonyl-[protein] + ADP + H(+). With respect to regulation, kinase activity is inhibited by C24:1-ceramide during hypoxia (e.g. submergences). Acts as a negative regulator in the ethylene response pathway. Phosphorylates the cytosolic C-terminal domain of EIN2, preventing the signaling in the absence of ethylene. Interacts with C24:1-ceramide upon hypoxic conditions (e.g. submergences) to in turn regulate EIN2 endoplasmic reticulum (ER)-to-nucleus translocation and EIN3 stabilization. This chain is Serine/threonine-protein kinase CTR1, found in Arabidopsis thaliana (Mouse-ear cress).